Reading from the N-terminus, the 209-residue chain is Mitochondrial import inner membrane translocase subunit Tim23 (209 aa).

Helical transmembrane passes span 73-93 (FELA…FGAV), 125-145 (ALWA…GVII), and 180-200 (GGLA…WEHI).

It belongs to the Tim17/Tim22/Tim23 family. As to quaternary structure, component of the TIM23 complex at least composed of timm23, timm17 and timm50. The complex interacts with the timm44 component of the PAM complex.

The protein localises to the mitochondrion inner membrane. Essential component of the TIM23 complex, a complex that mediates the translocation of transit peptide-containing proteins across the mitochondrial inner membrane. The sequence is that of Mitochondrial import inner membrane translocase subunit Tim23 (timm23) from Xenopus tropicalis (Western clawed frog).